The following is a 195-amino-acid chain: Granulocyte colony-stimulating factor (195 aa).

A signal peptide spans Met1–Ala21. Disulfide bonds link Cys57–Cys63 and Cys85–Cys95. O-linked (GalNAc...) threonine glycosylation occurs at Thr154.

The protein belongs to the IL-6 superfamily. In terms of assembly, monomer. In terms of processing, O-glycosylated.

It localises to the secreted. In terms of biological role, granulocyte/macrophage colony-stimulating factors are cytokines that act in hematopoiesis by controlling the production, differentiation, and function of 2 related white cell populations of the blood, the granulocytes and the monocytes-macrophages. This CSF induces granulocytes. This is Granulocyte colony-stimulating factor (CSF3) from Bos taurus (Bovine).